The sequence spans 1070 residues: RecBCD enzyme subunit RecC (1070 aa).

Belongs to the RecC family. In terms of assembly, heterotrimer of RecB, RecC and RecD. All subunits contribute to DNA-binding.

A helicase/nuclease that prepares dsDNA breaks (DSB) for recombinational DNA repair. Binds to DSBs and unwinds DNA via a highly rapid and processive ATP-dependent bidirectional helicase activity. Unwinds dsDNA until it encounters a Chi (crossover hotspot instigator) sequence from the 3' direction. Cuts ssDNA a few nucleotides 3' to the Chi site. The properties and activities of the enzyme are changed at Chi. The Chi-altered holoenzyme produces a long 3'-ssDNA overhang and facilitates RecA-binding to the ssDNA for homologous DNA recombination and repair. Holoenzyme degrades any linearized DNA that is unable to undergo homologous recombination. In the holoenzyme this subunit recognizes the wild-type Chi sequence, and when added to isolated RecB increases its ATP-dependent helicase processivity. The chain is RecBCD enzyme subunit RecC from Buchnera aphidicola subsp. Acyrthosiphon pisum (strain APS) (Acyrthosiphon pisum symbiotic bacterium).